We begin with the raw amino-acid sequence, 454 residues long: Tubulin beta-3 chain (454 aa).

GTP contacts are provided by Q11, E75, S144, G148, T149, G150, N210, and N232. E75 is a Mg(2+) binding site. Residues 435-454 form a disordered region; it reads TADDEFDPEVNQEEVEGDCI.

This sequence belongs to the tubulin family. In terms of assembly, dimer of alpha and beta chains. A typical microtubule is a hollow water-filled tube with an outer diameter of 25 nm and an inner diameter of 15 nM. Alpha-beta heterodimers associate head-to-tail to form protofilaments running lengthwise along the microtubule wall with the beta-tubulin subunit facing the microtubule plus end conferring a structural polarity. Microtubules usually have 13 protofilaments but different protofilament numbers can be found in some organisms and specialized cells. It depends on Mg(2+) as a cofactor.

It localises to the cytoplasm. Its subcellular location is the cytoskeleton. In terms of biological role, tubulin is the major constituent of microtubules, a cylinder consisting of laterally associated linear protofilaments composed of alpha- and beta-tubulin heterodimers. Microtubules grow by the addition of GTP-tubulin dimers to the microtubule end, where a stabilizing cap forms. Below the cap, tubulin dimers are in GDP-bound state, owing to GTPase activity of alpha-tubulin. This is Tubulin beta-3 chain (betaTub60D) from Drosophila melanogaster (Fruit fly).